Reading from the N-terminus, the 298-residue chain is uncharacterized protein (298 aa).

The region spanning 1-61 is the HTH lysR-type domain; the sequence is MDIFISKKMR…TRKDNNISLN (61 aa). A DNA-binding region (H-T-H motif) is located at residues 21 to 40; that stretch reads IARAAEKIHMTASPFGKSIA.

The protein belongs to the LysR transcriptional regulatory family.

This is an uncharacterized protein from Escherichia coli (strain K12).